The chain runs to 1124 residues: Translation initiation factor IF-2 (1124 aa).

Positions 32–41 are enriched in low complexity; sequence IAAKSHSSSI. Disordered stretches follow at residues 32-451 and 480-523; these read IAAK…QKVH and LARP…RAAR. A compositionally biased stretch (polar residues) spans 94–104; the sequence is ATSSSEISQVK. Residues 134-173 are compositionally biased toward low complexity; the sequence is VNPTTTPTSSPPKTAARPVNAPISRPATPSRPSAPTPRSA. Residues 192-203 are compositionally biased toward polar residues; that stretch reads GQTSTSSKATTV. The span at 214–227 shows a compositional bias: low complexity; that stretch reads SRPQSPAAPGRSAP. Basic and acidic residues-rich tracts occupy residues 235 to 246 and 261 to 272; these read SDRKAPKPELVG and PEPEGQRPDKKR. 2 stretches are compositionally biased toward low complexity: residues 274-283 and 411-422; these read GISPRPIGGP and RPAQAPAAGAPR. Over residues 425–439 the composition is skewed to basic and acidic residues; it reads GRPDWDDSAKLEALR. 2 stretches are compositionally biased toward basic residues: residues 484–493 and 500–514; these read AKPKSQKKPA and LRKR…RQRR. The 173-residue stretch at 615 to 787 folds into the tr-type G domain; it reads RRPPVVTVMG…ILLVTEVEDL (173 aa). The G1 stretch occupies residues 624-631; the sequence is GHVDHGKT. 624-631 is a GTP binding site; it reads GHVDHGKT. The interval 649–653 is G2; the sequence is GITQH. The segment at 674–677 is G3; it reads DTPG. Residues 674–678 and 728–731 each bind GTP; these read DTPGH and NKTD. A G4 region spans residues 728-731; sequence NKTD. The interval 764–766 is G5; sequence SAI.

This sequence belongs to the TRAFAC class translation factor GTPase superfamily. Classic translation factor GTPase family. IF-2 subfamily.

The protein resides in the cytoplasm. One of the essential components for the initiation of protein synthesis. Protects formylmethionyl-tRNA from spontaneous hydrolysis and promotes its binding to the 30S ribosomal subunits. Also involved in the hydrolysis of GTP during the formation of the 70S ribosomal complex. This Prochlorococcus marinus (strain MIT 9303) protein is Translation initiation factor IF-2.